We begin with the raw amino-acid sequence, 123 residues long: Non-specific lipid-transfer protein 3 (123 aa).

The N-terminal stretch at 1–25 (MASSGQLLKLVCLVAVMCCMAVGGP) is a signal peptide. Disulfide bonds link Cys33–Cys80, Cys43–Cys57, Cys58–Cys105, and Cys78–Cys119.

The protein belongs to the plant LTP family.

Functionally, plant non-specific lipid-transfer proteins transfer phospholipids as well as galactolipids across membranes. May play a role in wax or cutin deposition in the cell walls of expanding epidermal cells and certain secretory tissues. This chain is Non-specific lipid-transfer protein 3, found in Prunus dulcis (Almond).